Reading from the N-terminus, the 107-residue chain is MKDVQRIALLFDFYGPLLTERQQELIRAYYLEDHSLAEIADADGVSRQAVHELIRRSEAALQEYEQRLGFVAEHQRRLRLLDELQEALDRADLSAARRALAALRAEA.

The protein belongs to the UPF0122 family.

Functionally, might take part in the signal recognition particle (SRP) pathway. This is inferred from the conservation of its genetic proximity to ftsY/ffh. May be a regulatory protein. In Symbiobacterium thermophilum (strain DSM 24528 / JCM 14929 / IAM 14863 / T), this protein is UPF0122 protein STH1464.